The sequence spans 341 residues: MLKKVYYFLIFLFIVACSSSDDGKSEAKTVSLIVDGAFDDKGFNESSSKAIRKLKADLNINIIEKASTGNSYLGDIANLEDGNSNLIWGIGFRLSDILFQRASENVSVNYAIIEGVYDEIQIPKNLLNISFRSEEVAFLAGYFASKASKTGKIGFVGGVRGKVLESFMYGYEAGAKYANSNIKVVSQYVGTFGDFGLGRSTASNMYRDGVDIIFAAAGLSGIGVIEAAKELGPDHYIIGVDQDQSYLAPNNVIVSAVKKVDSLMYSLTKKYLETGVLDGGKTMFLGLKEDGLGLVLNENLKSNYSEIYNKSLKIGQSIMNGIIKVPYDKVSYDNFVLQMEN.

Residues 1–16 (MLKKVYYFLIFLFIVA) form the signal peptide. Residue Cys-17 is the site of N-palmitoyl cysteine attachment. Residue Cys-17 is the site of S-diacylglycerol cysteine attachment.

Belongs to the BMP lipoprotein family. As to quaternary structure, monomer.

It is found in the cell inner membrane. Binds adenosine and inosine. May be part of an ABC-type nucleoside uptake system involved in the purine salvage pathway. The chain is Basic membrane protein D from Borreliella burgdorferi (strain JD1) (Borrelia burgdorferi).